Here is an 88-residue protein sequence, read N- to C-terminus: MAKSKTPAKRARRAEANRLRNKAYKSKLKTAIKNYENAIIAEDLDTASNKLLQVTSLLDRSITKGILHKNNVARKKSALSKKLNSISQ.

Belongs to the bacterial ribosomal protein bS20 family.

In terms of biological role, binds directly to 16S ribosomal RNA. The chain is Small ribosomal subunit protein bS20 from Syntrophomonas wolfei subsp. wolfei (strain DSM 2245B / Goettingen).